Consider the following 713-residue polypeptide: Glycine--tRNA ligase beta subunit (713 aa).

It belongs to the class-II aminoacyl-tRNA synthetase family. Tetramer of two alpha and two beta subunits.

It is found in the cytoplasm. It carries out the reaction tRNA(Gly) + glycine + ATP = glycyl-tRNA(Gly) + AMP + diphosphate. The sequence is that of Glycine--tRNA ligase beta subunit from Picosynechococcus sp. (strain ATCC 27264 / PCC 7002 / PR-6) (Agmenellum quadruplicatum).